The following is a 317-amino-acid chain: Melanocyte-stimulating hormone receptor (317 aa).

The Extracellular segment spans residues 1 to 37 (MPAQGSQRSLLGSLNSTLMATSSLGLSANQSGPQCLE). Residues Asn15 and Asn29 are each glycosylated (N-linked (GlcNAc...) asparagine). The helical transmembrane segment at 38-63 (VSVPDGLFLCLGLVSLVENMLVVAAI) threads the bilayer. Topologically, residues 64 to 72 (AKNRNLHSP) are cytoplasmic. A helical transmembrane segment spans residues 73-93 (MYCFICCLALSDLLVSVSNVL). Residues 94-118 (ETAVMLLLEAGALAAQATVVQQLDN) are Extracellular-facing. The chain crosses the membrane as a helical span at residues 119-140 (IIDVLVCSSMVSSLCFLGAIAM). The Cytoplasmic portion of the chain corresponds to 141-163 (DRYISIFYALRYHSIVTLSRAQW). Residues 164 to 183 (ATAAVWAAGILSSTLFIAYY) form a helical membrane-spanning segment. Topologically, residues 184–191 (DHTAVLLC) are extracellular. A helical transmembrane segment spans residues 192-211 (LVVFFLAMLVLMAVLYAHML). Residues 212-240 (TQACQHVQGITRLHKRQHLVQQGFGLKGA) are Cytoplasmic-facing. The helical transmembrane segment at 241–266 (ATLTILLGVFLLCWGPFFLHLTLIAV) threads the bilayer. Topologically, residues 267 to 279 (CPQHPTCSCVFKN) are extracellular. Residues 280–300 (FKLFLALIICNAIVDPLIYAF) form a helical membrane-spanning segment. Over 301-317 (RXQELRKTLKEVLLFSW) the chain is Cytoplasmic.

The protein belongs to the G-protein coupled receptor 1 family. As to quaternary structure, interacts with MGRN1, but does not undergo MGRN1-mediated ubiquitination; this interaction competes with GNAS-binding and thus inhibits agonist-induced cAMP production. Interacts with OPN3; the interaction results in a decrease in MC1R-mediated cAMP signaling and ultimately a decrease in melanin production in melanocytes.

The protein resides in the cell membrane. Receptor for MSH (alpha, beta and gamma) and ACTH. The activity of this receptor is mediated by G proteins which activate adenylate cyclase. Mediates melanogenesis, the production of eumelanin (black/brown) and phaeomelanin (red/yellow), via regulation of cAMP signaling in melanocytes. The protein is Melanocyte-stimulating hormone receptor (MC1R) of Loris tardigradus (Slender loris).